Reading from the N-terminus, the 200-residue chain is Probable nicotinate-nucleotide adenylyltransferase (200 aa).

It belongs to the NadD family.

It catalyses the reaction nicotinate beta-D-ribonucleotide + ATP + H(+) = deamido-NAD(+) + diphosphate. The protein operates within cofactor biosynthesis; NAD(+) biosynthesis; deamido-NAD(+) from nicotinate D-ribonucleotide: step 1/1. In terms of biological role, catalyzes the reversible adenylation of nicotinate mononucleotide (NaMN) to nicotinic acid adenine dinucleotide (NaAD). The polypeptide is Probable nicotinate-nucleotide adenylyltransferase (Clostridium botulinum (strain Eklund 17B / Type B)).